A 195-amino-acid polypeptide reads, in one-letter code: MGSVSNQEITEGLPKSLDGTADIHKSDKSVIFQGSGVCKWFNVRMGFGFLTMTKKEGTDLETPLDVFVHQSKLHMEGFRSLKEGESVEFTFKKSSKGLESTQVTGPGGAPCIGSERRPKVKGQQKRRQRGDRCYNCGGLDHHAKECKLPPQPKKCHFCQNPNHMVAQCPEKAMQAANLEDQPITEEQELIPEIME.

Positions Q33 to P106 constitute a CSD domain. Positions L98–R127 are disordered. Residues G107–G130 are flexible linker. A compositionally biased stretch (basic residues) spans P118–R127. 2 consecutive CCHC-type zinc fingers follow at residues D131–L148 and K153–E170. Zn(2+) contacts are provided by C133, C136, H141, C146, C155, C158, H163, and C168.

This sequence belongs to the lin-28 family. In terms of assembly, monomer.

It localises to the cytoplasm. The protein localises to the rough endoplasmic reticulum. The protein resides in the P-body. It is found in the stress granule. Its subcellular location is the nucleus. It localises to the nucleolus. Functionally, RNA-binding protein that inhibits processing of pre-let-7 miRNAs and regulates translation of mRNAs that control developmental timing, pluripotency and metabolism. Seems to recognize a common structural G-quartet (G4) feature in its miRNA and mRNA targets. 'Translational enhancer' that drives specific mRNAs to polysomes and increases the efficiency of protein synthesis. Its association with the translational machinery and target mRNAs results in an increased number of initiation events per molecule of mRNA and, indirectly, in mRNA stabilization. Suppressor of microRNA (miRNA) biogenesis, including that of let-7. Binds specific target miRNA precursors (pre-miRNAs), recognizing an 5'-GGAG-3' motif found in their terminal loop, and recruits uridylyltransferase. This results in the terminal uridylation of target pre-miRNAs. Uridylated pre-miRNAs fail to be processed by Dicer and undergo degradation. Localized to the periendoplasmic reticulum area, binds to a large number of spliced mRNAs and inhibits the translation of mRNAs destined for the ER, reducing the synthesis of transmembrane proteins, ER or Golgi lumen proteins, and secretory proteins. Binds to and enhances the translation of mRNAs for several metabolic enzymes, increasing glycolysis and oxidative phosphorylation. Which, with the let-7 repression may enhance tissue repair in adult tissue. In Xenopus laevis (African clawed frog), this protein is Protein lin-28 homolog A (lin28a).